Here is a 101-residue protein sequence, read N- to C-terminus: STAS-domain containing protein PA14_20770 (101 aa).

The 88-residue stretch at 14–101 (LTIQIQGRFD…SNFEQLFKIS (88 aa)) folds into the STAS domain.

Post-translationally, phosphorylated on a serine residue, possibly on Ser-56.

The protein localises to the secreted. The chain is STAS-domain containing protein PA14_20770 from Pseudomonas aeruginosa (strain UCBPP-PA14).